Here is a 360-residue protein sequence, read N- to C-terminus: Phenylalanine--tRNA ligase alpha subunit (360 aa).

E260 is a binding site for Mg(2+).

The protein belongs to the class-II aminoacyl-tRNA synthetase family. Phe-tRNA synthetase alpha subunit type 1 subfamily. Tetramer of two alpha and two beta subunits. Requires Mg(2+) as cofactor.

Its subcellular location is the cytoplasm. It carries out the reaction tRNA(Phe) + L-phenylalanine + ATP = L-phenylalanyl-tRNA(Phe) + AMP + diphosphate + H(+). This Rhizobium etli (strain CIAT 652) protein is Phenylalanine--tRNA ligase alpha subunit.